A 134-amino-acid polypeptide reads, in one-letter code: UPF0412 protein YaaI (134 aa).

Positions 1 to 23 (MRSVLTISASLLFGLALSSVAHA) are cleaved as a signal peptide.

The protein belongs to the UPF0412 family.

The chain is UPF0412 protein YaaI from Salmonella paratyphi B (strain ATCC BAA-1250 / SPB7).